The following is a 210-amino-acid chain: Protein GET1 (210 aa).

Residues 1–4 (MASL) are Lumenal-facing. A helical membrane pass occupies residues 5–24 (LIIVFLSHVVTYLINTIGAT). The Cytoplasmic segment spans residues 25–110 (TVDNLLWLLY…SFDLTVKSVR (86 aa)). A coiled-coil region spans residues 43 to 97 (RTAVEQRRLKGEVVQLKREMKSTSSQDEFAKWAKLRRRHDKAMEEYEAKNKALGK). A helical transmembrane segment spans residues 111–131 (FFSTTGLKFFLQFWYSKTPMF). At 132–155 (ELPRGWVPWQVEWVLSFPRAPLGT) the chain is on the lumenal side. The chain crosses the membrane as a helical span at residues 156-172 (VSIQVWSGVCTTVVSLA). The Cytoplasmic segment spans residues 173–210 (GDALGVVIQSLILKMTKRGVARTSEGRPSQPMALKKEL).

The protein belongs to the WRB/GET1 family. Interacts with GET3.

The protein localises to the endoplasmic reticulum membrane. Functionally, required for the post-translational delivery of tail-anchored (TA) proteins to the endoplasmic reticulum. Acts as a membrane receptor for soluble GET3, which recognizes and selectively binds the transmembrane domain of TA proteins in the cytosol. The chain is Protein GET1 from Uncinocarpus reesii (strain UAMH 1704).